The following is a 241-amino-acid chain: Uridylate kinase (241 aa).

Residue 12-15 coordinates ATP; sequence KLSG. Gly54 is a UMP binding site. ATP contacts are provided by Gly55 and Arg59. UMP-binding positions include Asp74 and 135 to 142; that span reads VGAPYFTT. Positions 162, 168, and 171 each coordinate ATP.

It belongs to the UMP kinase family. Homohexamer.

It is found in the cytoplasm. The catalysed reaction is UMP + ATP = UDP + ADP. It participates in pyrimidine metabolism; CTP biosynthesis via de novo pathway; UDP from UMP (UMPK route): step 1/1. Its activity is regulated as follows. Inhibited by UTP. Catalyzes the reversible phosphorylation of UMP to UDP. The polypeptide is Uridylate kinase (Sphingopyxis alaskensis (strain DSM 13593 / LMG 18877 / RB2256) (Sphingomonas alaskensis)).